Here is a 435-residue protein sequence, read N- to C-terminus: Trigger factor (435 aa).

The PPIase FKBP-type domain occupies 162–247; it reads GDRINIDYRG…LSGVESSKLP (86 aa).

The protein belongs to the FKBP-type PPIase family. Tig subfamily.

The protein localises to the cytoplasm. The enzyme catalyses [protein]-peptidylproline (omega=180) = [protein]-peptidylproline (omega=0). Functionally, involved in protein export. Acts as a chaperone by maintaining the newly synthesized protein in an open conformation. Functions as a peptidyl-prolyl cis-trans isomerase. The polypeptide is Trigger factor (Nitrosospira multiformis (strain ATCC 25196 / NCIMB 11849 / C 71)).